The sequence spans 211 residues: RING finger protein narya (211 aa).

The RING-type zinc finger occupies 6-47 (CNKCFRHRKTDPAVPFHLTQCRHVICGPCLGQSSLEKNCPLC). The segment at 149 to 211 (RRRHSAGERF…FGSDTKGFRL (63 aa)) is disordered. Positions 153–165 (SAGERFHTPEFKE) are enriched in basic and acidic residues. The span at 172-184 (STSDKSPSDMPSD) shows a compositional bias: low complexity.

In terms of assembly, may interact with itself, with nenya and vilya through its RING-type zinc finger. As to expression, expressed in nurse cell and pro-oocytes (at protein level).

It localises to the chromosome. Its function is as follows. Required for the formation of DNA double-strand breaks (DSBs) together with nenya and vilya during the meiotic recombination process. Plays a role in DSBs processing into crossovers. Plays a redundant role with nenya in chromosome segregation during female meiosis. The chain is RING finger protein narya from Drosophila melanogaster (Fruit fly).